A 492-amino-acid polypeptide reads, in one-letter code: Probable protein phosphatase 2C 33 (492 aa).

Residues 1–46 (MGSCLSAESRSPRPGSPCSPAFSVRKRKNSKKRPGSRNSSFDYRRE) form a disordered region. Basic residues predominate over residues 24-35 (VRKRKNSKKRPG). Positions 64-393 (VACIYTQQGK…DDCAAVCLYL (330 aa)) constitute a PPM-type phosphatase domain. Mn(2+) contacts are provided by Asp100, Gly101, Asp338, and Asp384. Residues 406-468 (SISKLEDGEE…ADNLDSEPGT (63 aa)) are disordered. Residues 412-427 (DGEEEELKATTEDDDA) are compositionally biased toward acidic residues. Positions 441-460 (SGKEIALDESETEKLIKEAD) are enriched in basic and acidic residues.

It belongs to the PP2C family. Mg(2+) is required as a cofactor. Requires Mn(2+) as cofactor.

It carries out the reaction O-phospho-L-seryl-[protein] + H2O = L-seryl-[protein] + phosphate. The catalysed reaction is O-phospho-L-threonyl-[protein] + H2O = L-threonyl-[protein] + phosphate. This is Probable protein phosphatase 2C 33 (PPC6-1) from Arabidopsis thaliana (Mouse-ear cress).